We begin with the raw amino-acid sequence, 109 residues long: Large ribosomal subunit protein uL22 (109 aa).

The protein belongs to the universal ribosomal protein uL22 family. In terms of assembly, part of the 50S ribosomal subunit.

This protein binds specifically to 23S rRNA; its binding is stimulated by other ribosomal proteins, e.g. L4, L17, and L20. It is important during the early stages of 50S assembly. It makes multiple contacts with different domains of the 23S rRNA in the assembled 50S subunit and ribosome. Functionally, the globular domain of the protein is located near the polypeptide exit tunnel on the outside of the subunit, while an extended beta-hairpin is found that lines the wall of the exit tunnel in the center of the 70S ribosome. In Paraburkholderia phymatum (strain DSM 17167 / CIP 108236 / LMG 21445 / STM815) (Burkholderia phymatum), this protein is Large ribosomal subunit protein uL22.